Here is a 451-residue protein sequence, read N- to C-terminus: Phosphoglucosamine mutase (451 aa).

S102 (phosphoserine intermediate) is an active-site residue. The Mg(2+) site is built by S102, D242, D244, and D246. At S102 the chain carries Phosphoserine.

Belongs to the phosphohexose mutase family. The cofactor is Mg(2+). Post-translationally, activated by phosphorylation.

It catalyses the reaction alpha-D-glucosamine 1-phosphate = D-glucosamine 6-phosphate. In terms of biological role, catalyzes the conversion of glucosamine-6-phosphate to glucosamine-1-phosphate. This Staphylococcus aureus (strain Mu3 / ATCC 700698) protein is Phosphoglucosamine mutase.